We begin with the raw amino-acid sequence, 345 residues long: NADPH dehydrogenase (345 aa).

23–26 lines the FMN pocket; sequence SPMC. Y28 is a substrate binding site. A60 and Q102 together coordinate FMN. 164–167 serves as a coordination point for substrate; that stretch reads HGAH. Residues R215 and 307–308 each bind FMN; that span reads GR.

The protein belongs to the NADH:flavin oxidoreductase/NADH oxidase family. NamA subfamily. Homotetramer. Requires FMN as cofactor.

The catalysed reaction is A + NADPH + H(+) = AH2 + NADP(+). In terms of biological role, catalyzes the reduction of the double bond of an array of alpha,beta-unsaturated aldehydes and ketones. It also reduces the nitro group of nitroester and nitroaromatic compounds. It could have a role in detoxification processes. The polypeptide is NADPH dehydrogenase (Bacillus thuringiensis (strain Al Hakam)).